The sequence spans 101 residues: NAD(P)H-quinone oxidoreductase subunit 4L, chloroplastic (101 aa).

The next 3 membrane-spanning stretches (helical) occupy residues 2 to 22 (MLEH…YGLI), 32 to 52 (MCLE…SDFF), and 61 to 81 (IFSI…PAIV).

It belongs to the complex I subunit 4L family. NDH is composed of at least 16 different subunits, 5 of which are encoded in the nucleus.

It is found in the plastid. The protein localises to the chloroplast thylakoid membrane. It catalyses the reaction a plastoquinone + NADH + (n+1) H(+)(in) = a plastoquinol + NAD(+) + n H(+)(out). The enzyme catalyses a plastoquinone + NADPH + (n+1) H(+)(in) = a plastoquinol + NADP(+) + n H(+)(out). Functionally, NDH shuttles electrons from NAD(P)H:plastoquinone, via FMN and iron-sulfur (Fe-S) centers, to quinones in the photosynthetic chain and possibly in a chloroplast respiratory chain. The immediate electron acceptor for the enzyme in this species is believed to be plastoquinone. Couples the redox reaction to proton translocation, and thus conserves the redox energy in a proton gradient. The protein is NAD(P)H-quinone oxidoreductase subunit 4L, chloroplastic of Morus indica (Mulberry).